A 223-amino-acid polypeptide reads, in one-letter code: NLP effector protein 3 (223 aa).

The Conserved undecapeptide motif motif lies at 90–100 (AIMYVWYFPKD). The Conserved heptapeptide motif signature appears at 107–113 (GHRHDWE).

It belongs to the Necrosis inducing protein (NPP1) family.

It localises to the secreted. It is found in the host cytoplasm. In terms of biological role, probable secreted effector that may act as a pathogen-associated molecular pattern (PAMP) recognized by the plant immune system. Seems not to induce necrosis, neither in several susceptible or resistant Vitis species nor in the dicot model plant Nicotiana benthamiana. The chain is NLP effector protein 3 from Plasmopara viticola (Downy mildew of grapevine).